The following is a 119-amino-acid chain: FAD-linked sulfhydryl oxidase (119 aa).

Residues 1-97 (MLHWGPKYWR…ISWSEYKNIY (97 aa)) enclose the ERV/ALR sulfhydryl oxidase domain. Cysteines 44 and 47 form a disulfide.

The protein belongs to the asfivirus B119L family. As to quaternary structure, interacts with A151R. It depends on FAD as a cofactor.

It localises to the host cytoplasm. It is found in the virion. It carries out the reaction 2 R'C(R)SH + O2 = R'C(R)S-S(R)CR' + H2O2. Its function is as follows. FAD-dependent sulfhydryl oxidase that catalyzes the formation of disulfide bonds in viral proteins produced in the cell cytoplasm. Involved in virion maturation. In African swine fever virus (isolate Warthog/Namibia/Wart80/1980) (ASFV), this protein is FAD-linked sulfhydryl oxidase.